The chain runs to 294 residues: MVDAEKIKKLREMTDSGFLDCKKALEATKNDLNAAVKWLQENGKAKAAKKADRITAEGLVAAFSNDKYGVIIEINSETDFVAKNQKFKDLVNKIGQELLKHDFYKYKNIIEEVKIGNETLAELVASASATIGEKLTFRRAEQVKKFNSKQVIGVYNHFDGQKAAVLIIENGTEDMAKQLSMHITAMNPLFLDEKEVPEKEIKKLRSEFEKDEQIQLKPEKIRPKIIEGMINKKLSETTFTLQEFVVEPGQSIKQYMNSKNSFPISKIRYEVGEGIEKQVVDFASEVANQMKNKA.

Residues 78-81 form an involved in Mg(2+) ion dislocation from EF-Tu region; sequence TDFV.

Belongs to the EF-Ts family.

Its subcellular location is the cytoplasm. In terms of biological role, associates with the EF-Tu.GDP complex and induces the exchange of GDP to GTP. It remains bound to the aminoacyl-tRNA.EF-Tu.GTP complex up to the GTP hydrolysis stage on the ribosome. The protein is Elongation factor Ts of Mycoplasma mobile (strain ATCC 43663 / 163K / NCTC 11711) (Mesomycoplasma mobile).